The chain runs to 316 residues: Protoheme IX farnesyltransferase (316 aa).

The next 8 membrane-spanning stretches (helical) occupy residues 35 to 55, 56 to 76, 119 to 139, 156 to 176, 183 to 203, 229 to 246, 250 to 272, and 283 to 303; these read VMVLVIFTALVGMVVSQGHVQ, PAIGAISLLAIAVGAGASGCL, VVLGLAANLLAAALLAFTIVF, IVIGGAAGALPPVIGQAVVTG, LILFAIIFIWTPPHFWALALI, IVWYSLLLAPLGLVPVAL, GLVYAVVGLVGGLGMVAFSIRVL, and AAMGMFGFSILYLFALFSALL.

The protein belongs to the UbiA prenyltransferase family. Protoheme IX farnesyltransferase subfamily.

It localises to the cell inner membrane. It catalyses the reaction heme b + (2E,6E)-farnesyl diphosphate + H2O = Fe(II)-heme o + diphosphate. The protein operates within porphyrin-containing compound metabolism; heme O biosynthesis; heme O from protoheme: step 1/1. Functionally, converts heme B (protoheme IX) to heme O by substitution of the vinyl group on carbon 2 of heme B porphyrin ring with a hydroxyethyl farnesyl side group. In Methylobacterium radiotolerans (strain ATCC 27329 / DSM 1819 / JCM 2831 / NBRC 15690 / NCIMB 10815 / 0-1), this protein is Protoheme IX farnesyltransferase.